Reading from the N-terminus, the 295-residue chain is 4-diphosphocytidyl-2-C-methyl-D-erythritol kinase (295 aa).

Lys-18 is an active-site residue. An ATP-binding site is contributed by 101–111 (PMGGGIGGGSS). Asp-143 is a catalytic residue.

The protein belongs to the GHMP kinase family. IspE subfamily.

The enzyme catalyses 4-CDP-2-C-methyl-D-erythritol + ATP = 4-CDP-2-C-methyl-D-erythritol 2-phosphate + ADP + H(+). The protein operates within isoprenoid biosynthesis; isopentenyl diphosphate biosynthesis via DXP pathway; isopentenyl diphosphate from 1-deoxy-D-xylulose 5-phosphate: step 3/6. Catalyzes the phosphorylation of the position 2 hydroxy group of 4-diphosphocytidyl-2C-methyl-D-erythritol. The sequence is that of 4-diphosphocytidyl-2-C-methyl-D-erythritol kinase from Vibrio vulnificus (strain YJ016).